A 541-amino-acid polypeptide reads, in one-letter code: Developmental and secondary metabolism regulator VEL1 (541 aa).

Positions asparagine 26 to arginine 220 constitute a Velvet domain. The Nuclear localization signal signature appears at glutamate 40–cysteine 45. Disordered regions lie at residues aspartate 222–glutamine 447 and proline 464–lysine 483. Over residues glycine 230–arginine 244 the composition is skewed to basic and acidic residues. The span at alanine 289 to leucine 298 shows a compositional bias: low complexity. Pro residues-rich tracts occupy residues proline 299 to alanine 314, alanine 345 to proline 355, and serine 425 to serine 439. The tract at residues methionine 444–leucine 472 is PEST.

The protein belongs to the velvet family. VeA subfamily. In terms of assembly, component of the heterotrimeric velvet complex composed of LAE1, VEL1 and VEL2; VEL1 acting as a bridging protein between LAE1 and VEL2.

Its subcellular location is the nucleus. The protein resides in the cytoplasm. Its function is as follows. Component of the velvet transcription factor complex that controls sexual/asexual developmental ratio in response to light, promoting sexual development in the darkness while stimulating asexual sporulation under illumination. The velvet complex acts as a global regulator for secondary metabolite gene expression. Controls the expression of the gliotoxin gene cluster. Plays a key role in mycoparasitism. The polypeptide is Developmental and secondary metabolism regulator VEL1 (Hypocrea virens (strain Gv29-8 / FGSC 10586) (Gliocladium virens)).